The following is a 305-amino-acid chain: Olfactory receptor 4X1 (305 aa).

Over 1-23 (MVATNNVTEIIFVGFSQNWSEQR) the chain is Extracellular. Residues Asn6 and Asn18 are each glycosylated (N-linked (GlcNAc...) asparagine). The chain crosses the membrane as a helical span at residues 24–47 (VISVMFLLMYTAVVLGNGLIVVTI). Residues 48–55 (LASKVLTS) lie on the Cytoplasmic side of the membrane. A helical membrane pass occupies residues 56–77 (PMYFFLSYLSFVEICYCSVMAP). At 78–98 (KLIFDSFIKRKVISLKGCLTQ) the chain is on the extracellular side. Residues Cys95 and Cys187 are joined by a disulfide bond. The helical transmembrane segment at 99 to 118 (MFSLHFFGGTEAFLLMVMAY) threads the bilayer. Over 119–137 (DRYVAICKPLHYMAIMNQR) the chain is Cytoplasmic. Residues 138-156 (MCGLLVRIAWGGGLLHSVG) form a helical membrane-spanning segment. Residues 157-193 (QTFLIFQLPFCGPNIMDHYFCDVHPVLELACADTFFI) are Extracellular-facing. A helical membrane pass occupies residues 194–217 (SLLIITNGGSISVVSFFVLMASYL). Residues 218–233 (IILHFLRSHNLEGQHK) are Cytoplasmic-facing. Residues 234-256 (ALSTCASHVTVVDLFFIPCSLVY) form a helical membrane-spanning segment. Over 257 to 267 (IRPCVTLPADK) the chain is Extracellular. A helical transmembrane segment spans residues 268–287 (IVAVFYTVVTPLLNPVIYSF). The Cytoplasmic portion of the chain corresponds to 288 to 305 (RNAEVKNAMRRFIGGKVI).

The protein belongs to the G-protein coupled receptor 1 family.

Its subcellular location is the cell membrane. Its function is as follows. Odorant receptor. This chain is Olfactory receptor 4X1 (OR4X1), found in Homo sapiens (Human).